The primary structure comprises 527 residues: Cytokinin dehydrogenase 3 (527 aa).

A signal peptide spans 1–22 (MEVAMVCTRVNLLILILSLCSP). The region spanning 52-231 (LFHSPSAVLK…TRARILLQEA (180 aa)) is the FAD-binding PCMH-type domain. FAD is bound by residues alanine 87, glycine 89, and glycine 91. A Pros-8alpha-FAD histidine modification is found at histidine 92. The FAD site is built by serine 93, glutamine 97, aspartate 155, threonine 160, serine 166, isoleucine 170, and isoleucine 221. An N-linked (GlcNAc...) asparagine glycan is attached at asparagine 413. Residues tyrosine 471 and glutamine 509 each coordinate FAD.

The protein belongs to the oxygen-dependent FAD-linked oxidoreductase family. As to quaternary structure, monomer. FAD serves as cofactor. As to expression, expressed in inflorescence meristems. Highly expressed in lamina joints, and mainly in the parenchyma cells and vascular bundles on the abaxial side of the lamina joint. Expressed in roots, stems, leaves and young panicles.

The protein resides in the endoplasmic reticulum. The enzyme catalyses N(6)-dimethylallyladenine + A + H2O = 3-methyl-2-butenal + adenine + AH2. Its function is as follows. Catalyzes the oxidation of cytokinins, a family of N(6)-substituted adenine derivatives, where the substituent is an isopentenyl group. Cytokinins are plant hormones essential for plant growth, development, and stress responses. Exhibits specific activities toward trans-zeatin (tZ) and isopentenyladenine (iP). Plays a role in lamina joint inclination. Regulates cell proliferation and vascular bundle number on the abaxial side of lamina joint. This Oryza sativa subsp. japonica (Rice) protein is Cytokinin dehydrogenase 3.